Reading from the N-terminus, the 166-residue chain is Phospholipase A2 inhibitor clone 04 (166 aa).

A signal peptide spans 1–19 (MRLILLSSLLLLGIFLANG). In terms of domain architecture, C-type lectin spans 46–161 (LKDAFLTVHR…CDDNRLVVCE (116 aa)). Intrachain disulfides connect Cys83/Cys160 and Cys138/Cys152. N-linked (GlcNAc...) asparagine glycosylation is present at Asn122.

Belongs to the alpha-type phospholipase A2 inhibitor family. In terms of assembly, homotrimer; non-covalently linked. As to expression, expressed by the liver.

It localises to the secreted. In terms of biological role, this phospholipase A2 inhibitor binds directly phospholipase A2 in the presence or absence of calcium. This is Phospholipase A2 inhibitor clone 04 from Bothrops moojeni (Lance-headed viper).